A 98-amino-acid polypeptide reads, in one-letter code: U-megalopygitoxin(1)-Mo1 (98 aa).

An N-terminal signal peptide occupies residues 1 to 17 (MYRETFVFCVLLAVVSA).

This sequence belongs to the caterpillar 1 family. Contains 4 disulfide bonds. Expressed by the venom apparatus.

It is found in the secreted. Functionally, probable toxin. This is U-megalopygitoxin(1)-Mo1 from Megalopyge opercularis (Southern flannel moth).